The sequence spans 602 residues: Arginine--tRNA ligase (602 aa).

The 'HIGH' region motif lies at 124–134 (ANPTGPVHVGR).

It belongs to the class-I aminoacyl-tRNA synthetase family.

It localises to the cytoplasm. The enzyme catalyses tRNA(Arg) + L-arginine + ATP = L-arginyl-tRNA(Arg) + AMP + diphosphate. The protein is Arginine--tRNA ligase of Halorubrum lacusprofundi (strain ATCC 49239 / DSM 5036 / JCM 8891 / ACAM 34).